A 314-amino-acid chain; its full sequence is RNA 2'-O-methyltransferase FBLL1 (314 aa).

Over residues 1 to 59 (MKPAGGRGGWGWGGGKGGSKGGDTGSGTKGGFGARTRGSSGGGRGRGRGGGGGGGGGGG) the composition is skewed to gly residues. The interval 1 to 82 (MKPAGGRGGW…RRKKGITVSV (82 aa)) is disordered. Arginine 7 carries the post-translational modification Omega-N-methylarginine. Over residues 64-77 (RGGPGKNKNRRKKG) the composition is skewed to basic residues. Residues 166 to 167 (TT), 185 to 186 (EF), 210 to 211 (DA), and 230 to 233 (DVAQ) contribute to the S-adenosyl-L-methionine site.

This sequence belongs to the methyltransferase superfamily. Fibrillarin family. In terms of assembly, component of a box C/D small nucleolar ribonucleoprotein (snoRNP) complex composed of FBLL1, SNU13/NHP2L1, NOP56 and NOP58 and a guide snoRNA which mediates 2'-hydroxyl ribose methylation in RNAs.

The protein localises to the nucleus. It is found in the nucleolus. It carries out the reaction a ribonucleotide in RNA + S-adenosyl-L-methionine = a 2'-O-methylribonucleotide in RNA + S-adenosyl-L-homocysteine + H(+). Its function is as follows. S-adenosyl-L-methionine-dependent RNA methyltransferase that catalyzes 2'-hydroxyl ribose methylation in RNAs. Functions as part of box C/D small nucleolar ribonucleoprotein (snoRNP) complexes, where guide snoRNAs ensure methylation specificity through base pairing with RNA substrates. Exhibits broad substrate specificity, methylating multiple sites on ribosomal RNAs (rRNAs) and messenger RNAs (mRNAs) depending on the guide snoRNA incorporated in the complex. Specifically expressed in brain, it regulates the expression of GAP43 by stabilizing its mRNA through methylation and thereby plays an indirect role in neuronal differentiation. This chain is RNA 2'-O-methyltransferase FBLL1, found in Mus musculus (Mouse).